A 486-amino-acid chain; its full sequence is Cardiolipin synthase A (486 aa).

Transmembrane regions (helical) follow at residues 3–23 (IFYD…IANI) and 38–58 (MSWL…WFFF). PLD phosphodiesterase domains follow at residues 219–246 (LDVR…VDPY) and 399–426 (KKGL…DMRS). Residues His224, Lys226, Asp231, His404, Lys406, and Asp411 contribute to the active site.

The protein belongs to the phospholipase D family. Cardiolipin synthase subfamily. ClsA sub-subfamily.

It is found in the cell inner membrane. The enzyme catalyses 2 a 1,2-diacyl-sn-glycero-3-phospho-(1'-sn-glycerol) = a cardiolipin + glycerol. Its function is as follows. Catalyzes the reversible phosphatidyl group transfer from one phosphatidylglycerol molecule to another to form cardiolipin (CL) (diphosphatidylglycerol) and glycerol. The sequence is that of Cardiolipin synthase A from Buchnera aphidicola subsp. Schizaphis graminum (strain Sg).